Here is an 840-residue protein sequence, read N- to C-terminus: Putative pentatricopeptide repeat-containing protein At1g31840 (840 aa).

PPR repeat units follow at residues 98-128 (KDPS…MITN), 145-179 (DADV…GVVI), 180-214 (PQDS…GIEP), 216-250 (GVSA…GFRV), 251-284 (GIVS…GPAP), 285-319 (NVVT…GIEP), 320-354 (DLIA…GVKL), 355-389 (DVVV…GISP), 390-424 (NVVT…GMEP), 425-459 (SIVT…GYPP), 460-494 (DVVI…SIRL), 495-529 (NVVV…GIKP), 530-564 (DVAT…GLEP), 565-599 (DALA…KISA), 600-634 (DIAV…KMEP), 635-669 (DIVT…PFGP), 670-704 (NTVT…GSKP), 705-739 (NAVT…GISP), 740-774 (SIVS…KLLP), and 775-809 (DVVA…GVKP).

This sequence belongs to the PPR family. P subfamily.

The chain is Putative pentatricopeptide repeat-containing protein At1g31840 from Arabidopsis thaliana (Mouse-ear cress).